We begin with the raw amino-acid sequence, 153 residues long: Small heat shock protein ibp (153 aa).

Positions K35–K153 constitute a sHSP domain.

Belongs to the small heat shock protein (HSP20) family.

The polypeptide is Small heat shock protein ibp (ibp) (Buchnera aphidicola subsp. Thelaxes suberi).